A 363-amino-acid polypeptide reads, in one-letter code: Peptide chain release factor 1 (363 aa).

An N5-methylglutamine modification is found at Q237.

The protein belongs to the prokaryotic/mitochondrial release factor family. Post-translationally, methylated by PrmC. Methylation increases the termination efficiency of RF1.

The protein resides in the cytoplasm. Its function is as follows. Peptide chain release factor 1 directs the termination of translation in response to the peptide chain termination codons UAG and UAA. The sequence is that of Peptide chain release factor 1 from Marinobacter nauticus (strain ATCC 700491 / DSM 11845 / VT8) (Marinobacter aquaeolei).